The chain runs to 74 residues: Antimicrobial peptide AcrAP2 (74 aa).

The signal sequence occupies residues 1-22 (MEIKYLLTVFLVLLIVSDHCQA). The residue at position 40 (K40) is a Lysine amide. Residues 46–74 (NLDGQIDRFRNFRKRDAELEELLSKLPIY) constitute a propeptide that is removed on maturation.

This sequence belongs to the non-disulfide-bridged peptide (NDBP) superfamily. Short antimicrobial peptide (group 4) family. As to expression, expressed by the venom gland.

The protein localises to the secreted. It localises to the target cell membrane. In terms of biological role, has antimicrobial activity against the Gram-positive bacteria S.aureus (MIC=8 uM) and the yeast C.albicans (MIC=16 uM). Causes hemolysis on horse erythrocytes (64 uM for 100% hemolysis). Minimum bactericidal concentrations have also been tested against S.aureus and is four-fold higher (MBC=32 uM). The polypeptide is Antimicrobial peptide AcrAP2 (Androctonus crassicauda (Arabian fat-tailed scorpion)).